The primary structure comprises 199 residues: Superoxide dismutase [Mn/Fe] (199 aa).

The Fe(3+) site is built by histidine 27, histidine 81, aspartate 161, and histidine 165. Positions 27, 81, 161, and 165 each coordinate Mn(2+).

The protein belongs to the iron/manganese superoxide dismutase family. As to quaternary structure, homodimer. Mn(2+) serves as cofactor. Requires Fe(3+) as cofactor.

The catalysed reaction is 2 superoxide + 2 H(+) = H2O2 + O2. Functionally, destroys superoxide anion radicals which are normally produced within the cells and which are toxic to biological systems. Catalyzes the dismutation of superoxide anion radicals into O2 and H2O2 by successive reduction and oxidation of the transition metal ion at the active site. The sequence is that of Superoxide dismutase [Mn/Fe] (sodA) from Staphylococcus haemolyticus (strain JCSC1435).